A 164-amino-acid chain; its full sequence is 3-dehydroquinate dehydratase (164 aa).

The active-site Proton acceptor is tyrosine 22. Substrate contacts are provided by asparagine 73, histidine 79, and aspartate 86. Catalysis depends on histidine 99, which acts as the Proton donor. Residues 100–101 and arginine 110 contribute to the substrate site; that span reads IS.

The protein belongs to the type-II 3-dehydroquinase family. As to quaternary structure, homododecamer.

It carries out the reaction 3-dehydroquinate = 3-dehydroshikimate + H2O. The protein operates within metabolic intermediate biosynthesis; chorismate biosynthesis; chorismate from D-erythrose 4-phosphate and phosphoenolpyruvate: step 3/7. In terms of biological role, catalyzes a trans-dehydration via an enolate intermediate. The polypeptide is 3-dehydroquinate dehydratase (Aliarcobacter butzleri (strain RM4018) (Arcobacter butzleri)).